The sequence spans 240 residues: Probable Ni/Fe-hydrogenase B-type cytochrome subunit (240 aa).

Transmembrane regions (helical) follow at residues 31–51, 75–95, 142–163, and 196–213; these read LWHWVTALSIVVLGVTGYFIG, FAAGYVLAIGFLGRVYWAFVG, LAMFCFFVVGAVFMSVTGFALY, and LGMWYLVVFVMVHVYLAV.

This sequence belongs to the HupC/HyaC/HydC family.

Its subcellular location is the cell membrane. Probable b-type cytochrome. In Azotobacter vinelandii, this protein is Probable Ni/Fe-hydrogenase B-type cytochrome subunit (hoxZ).